The following is a 985-amino-acid chain: Invasin (985 aa).

A D1 region spans residues 494 to 594; that stretch reads SVTVQQPQLT…RQSVDTHFVK (101 aa). Over 494 to 985 the chain is Extracellular; sequence SVTVQQPQLT…LAFPLCALAI (492 aa). Big-1 domains are found at residues 503-594 and 601-691; these read TLTA…HFVK and KSTL…VNFT. Residues 595-694 are D2; it reads GTIAADKSTL…SVTVNFTADP (100 aa). The interval 695 to 794 is D3; the sequence is IPDAGRSSFT…LQKKISLFPV (100 aa). Residues 795–886 are D4; the sequence is PTLTGILVNG…YSVSYRFYPN (92 aa). The integrin-binding stretch occupies residues 795-985; that stretch reads PTLTGILVNG…LAFPLCALAI (191 aa). The tract at residues 887 to 985 is D5; the sequence is RWIYDGGTSL…LAFPLCALAI (99 aa). Residues cysteine 906 and cysteine 981 are joined by a disulfide bond.

It belongs to the intimin/invasin family.

Its subcellular location is the cell surface. In terms of biological role, invasin is a protein that allows enteric bacteria to penetrate cultured mammalian cells. The entry of invasin in the cell is mediated by binding several beta-1 chain integrins. This is Invasin from Yersinia pseudotuberculosis serotype I (strain IP32953).